The chain runs to 1203 residues: Transmembrane channel-like protein 2 (1203 aa).

Disordered regions lie at residues 1-39 and 64-90; these read MPKS…IDSR and PHTR…EASK. Residues 73–86 are compositionally biased toward acidic residues; it reads FDDDDDEFDEEDDK. The helical transmembrane segment at 191–213 threads the bilayer; it reads VLGVNITITFIMCMFVVIPEWLA. The N-linked (GlcNAc...) asparagine glycan is linked to Asn225. 6 helical membrane-spanning segments follow: residues 276–298, 369–391, 406–428, 441–463, 665–687, and 714–736; these read YRVP…FIIL, FVAR…WAIM, ATAI…LGKI, LGRV…MLQL, MIWL…LIIL, and FFFA…VIAS. N-linked (GlcNAc...) asparagine glycosylation is present at Asn748. The helical transmembrane segment at 780–802 threads the bilayer; it reads IIIPVLVLLSLVIYFLIAMVTGL. Disordered regions lie at residues 826–908, 927–1039, 1059–1087, and 1112–1203; these read ELAG…SLPP, KYGR…IEKQ, ATVE…HEPL, and NDET…SDND. Polar residues predominate over residues 865-874; it reads NRSTAKSVSG. Residues 898–908 are compositionally biased toward low complexity; it reads DSESTTSSLPP. The segment covering 927–945 has biased composition (basic and acidic residues); sequence KYGRHDDIEMEEGGGRLRE. 2 stretches are compositionally biased toward low complexity: residues 973–997 and 1022–1035; these read QSFD…PSNS and SASS…PSSS. Residues 1061–1076 are compositionally biased toward polar residues; sequence VENSSQDPTRPPSTDD. Basic and acidic residues-rich tracts occupy residues 1133 to 1147 and 1172 to 1203; these read SPRE…KDQQ and PPSE…SDND.

The protein belongs to the TMC family.

It is found in the membrane. Its function is as follows. Probable ion channel. The sequence is that of Transmembrane channel-like protein 2 (tmc-2) from Caenorhabditis elegans.